A 352-amino-acid chain; its full sequence is Photosystem II D2 protein (352 aa).

A helical membrane pass occupies residues 40–60 (CAYMALGGWLTGTTFVTSWYT). H117 provides a ligand contact to chlorophyll a. Residues 124–140 (GFMLRQFEIARLVGIRP) form a helical membrane-spanning segment. 2 residues coordinate pheophytin a: Q129 and N142. The helical transmembrane segment at 152–165 (VFVSVFLMYPLGQS) threads the bilayer. H197 is a binding site for chlorophyll a. A helical membrane pass occupies residues 207–227 (GALLCAIHGATVENTLFEDGD). Residues H214 and F261 each contribute to the a plastoquinone site. Position 214 (H214) interacts with Fe cation. H268 contributes to the Fe cation binding site. The helical transmembrane segment at 278–294 (GLWTSSIGIIGLALNLR) threads the bilayer.

The protein belongs to the reaction center PufL/M/PsbA/D family. In terms of assembly, PSII is composed of 1 copy each of membrane proteins PsbA, PsbB, PsbC, PsbD, PsbE, PsbF, PsbH, PsbI, PsbJ, PsbK, PsbL, PsbM, PsbT, PsbX, PsbY, PsbZ, Psb30/Ycf12, peripheral proteins PsbO, CyanoQ (PsbQ), PsbU, PsbV and a large number of cofactors. It forms dimeric complexes. The D1/D2 heterodimer binds P680, chlorophylls that are the primary electron donor of PSII, and subsequent electron acceptors. It shares a non-heme iron and each subunit binds pheophytin, quinone, additional chlorophylls, carotenoids and lipids. There is also a Cl(-1) ion associated with D1 and D2, which is required for oxygen evolution. The PSII complex binds additional chlorophylls, carotenoids and specific lipids. serves as cofactor.

It is found in the cellular thylakoid membrane. It catalyses the reaction 2 a plastoquinone + 4 hnu + 2 H2O = 2 a plastoquinol + O2. Its function is as follows. Photosystem II (PSII) is a light-driven water:plastoquinone oxidoreductase that uses light energy to abstract electrons from H(2)O, generating O(2) and a proton gradient subsequently used for ATP formation. It consists of a core antenna complex that captures photons, and an electron transfer chain that converts photonic excitation into a charge separation. The D1/D2 (PsbA/PsbD) reaction center heterodimer binds P680, the primary electron donor of PSII as well as several subsequent electron acceptors. D2 is needed for assembly of a stable PSII complex. The polypeptide is Photosystem II D2 protein (Synechococcus sp. (strain RCC307)).